Reading from the N-terminus, the 525-residue chain is Chromosomal replication initiator protein DnaA (525 aa).

Residues 1–71 (MNDFWQHCSA…SDLAREFWNT (71 aa)) form a domain I, interacts with DnaA modulators region. The interval 71-188 (TPIEVQFVLD…GEADSMYERS (118 aa)) is domain II. The segment at 160 to 182 (AAAGRRTWRPGPGAAPANGGEAD) is disordered. Low complexity predominate over residues 169–181 (PGPGAAPANGGEA). The domain III, AAA+ region stretch occupies residues 189–405 (KLNPVLTFDN…GALRKILAYS (217 aa)). Positions 233, 235, 236, and 237 each coordinate ATP. Positions 406-525 (KFHGREISIE…LHVLEQTLKG (120 aa)) are domain IV, binds dsDNA.

This sequence belongs to the DnaA family. Oligomerizes as a right-handed, spiral filament on DNA at oriC.

It is found in the cytoplasm. Functionally, plays an essential role in the initiation and regulation of chromosomal replication. ATP-DnaA binds to the origin of replication (oriC) to initiate formation of the DNA replication initiation complex once per cell cycle. Binds the DnaA box (a 9 base pair repeat at the origin) and separates the double-stranded (ds)DNA. Forms a right-handed helical filament on oriC DNA; dsDNA binds to the exterior of the filament while single-stranded (ss)DNA is stabiized in the filament's interior. The ATP-DnaA-oriC complex binds and stabilizes one strand of the AT-rich DNA unwinding element (DUE), permitting loading of DNA polymerase. After initiation quickly degrades to an ADP-DnaA complex that is not apt for DNA replication. Binds acidic phospholipids. The polypeptide is Chromosomal replication initiator protein DnaA (Burkholderia orbicola (strain MC0-3)).